A 116-amino-acid polypeptide reads, in one-letter code: Large ribosomal subunit protein eL18 (116 aa).

This sequence belongs to the eukaryotic ribosomal protein eL18 family. Part of the 50S ribosomal subunit. Interacts weakly with proteins L4 and L15. Has been cross-linked to L4.

Stabilizes the tertiary rRNA structure within the 23S rRNA domain (domain II) to which it binds. The polypeptide is Large ribosomal subunit protein eL18 (rpl18e) (Haloarcula marismortui (strain ATCC 43049 / DSM 3752 / JCM 8966 / VKM B-1809) (Halobacterium marismortui)).